A 445-amino-acid polypeptide reads, in one-letter code: Argininosuccinate synthase (445 aa).

ATP contacts are provided by residues 17 to 25 and Ala-43; that span reads AFSGGLDTS. Tyr-99 is an L-citrulline binding site. 2 residues coordinate ATP: Gly-129 and Thr-131. L-aspartate-binding residues include Thr-131, Asn-135, and Asp-136. Asn-135 contacts L-citrulline. An ATP-binding site is contributed by Asp-136. The L-citrulline site is built by Arg-139 and Ser-192. Asp-194 is an ATP binding site. 3 residues coordinate L-citrulline: Thr-201, Glu-203, and Glu-280.

It belongs to the argininosuccinate synthase family. Type 2 subfamily. In terms of assembly, homotetramer.

The protein localises to the cytoplasm. It catalyses the reaction L-citrulline + L-aspartate + ATP = 2-(N(omega)-L-arginino)succinate + AMP + diphosphate + H(+). It functions in the pathway amino-acid biosynthesis; L-arginine biosynthesis; L-arginine from L-ornithine and carbamoyl phosphate: step 2/3. This Ralstonia pickettii (strain 12J) protein is Argininosuccinate synthase.